Reading from the N-terminus, the 903-residue chain is DNA mismatch repair protein MutS (903 aa).

A disordered region spans residues 1 to 89 (MPRSASQPPD…DEPAWGHHSQ (89 aa)). Composition is skewed to low complexity over residues 20–36 (APEP…SEPE) and 49–62 (ADAA…QATA). 719–726 (GPNASGKS) contacts ATP.

It belongs to the DNA mismatch repair MutS family.

Functionally, this protein is involved in the repair of mismatches in DNA. It is possible that it carries out the mismatch recognition step. This protein has a weak ATPase activity. The chain is DNA mismatch repair protein MutS from Synechococcus sp. (strain CC9605).